A 362-amino-acid polypeptide reads, in one-letter code: Replication-associated protein (362 aa).

The CRESS-DNA virus Rep endonuclease domain maps to 8 to 116 (RINAKNYFLT…DGDTLEWGEF (109 aa)). The RCR-1 motif lies at 15 to 18 (FLTY). Residues E49, H57, and H59 each coordinate a divalent metal cation. The short motif at 57–59 (HLH) is the RCR-2 element. The active-site For DNA cleavage activity is Y103. The RCR-3 motif lies at 103–106 (YLEK). Residue D107 coordinates a divalent metal cation. The segment at 143–153 (KSEALNVLREL) is binding to RBR1. The segment at 156–176 (KDYVLQFHNLNSNLDRIFTPP) is oligomerization. Residue 221–228 (GESRTGKT) participates in ATP binding. The tract at residues 341 to 362 (YSGTYQGPTQNSEEEVHPEEEN) is disordered. The span at 352-362 (SEEEVHPEEEN) shows a compositional bias: acidic residues.

Belongs to the geminiviridae Rep protein family. As to quaternary structure, homooligomer. Interacts with the replication enhancer protein (REn). Interacts with host retinoblastoma-related protein 1 (RBR1), and may thereby induce the transcription of host replicative enzymes even if the cell is not dividing anymore. Interacts with host PCNA. Interacts with host SCE1 protein. Binds to host RAD54 protein to ensure geminiviral replication. The cofactor is Mg(2+). Requires Mn(2+) as cofactor.

It localises to the host nucleus. Its function is as follows. Essential for the replication of viral ssDNA. The closed circular ssDNA genome is first converted to a superhelical dsDNA. Rep binds a specific region at the genome origin of replication. It introduces an endonucleolytic nick within the conserved sequence 5'-TAATATTAC-3' in the intergenic region of the genome present in all geminiviruses, thereby initiating the rolling circle replication (RCR). Following cleavage, binds covalently to the 5'-phosphate of DNA as a tyrosyl ester. The cleavage gives rise to a free 3'-OH that serves as a primer for the cellular DNA polymerase. The polymerase synthesizes the (+) strand DNA by rolling circle mechanism. After one round of replication, a Rep-catalyzed nucleotidyl transfer reaction releases a circular single-stranded virus genome, thereby terminating the replication. Displays origin-specific DNA cleavage, nucleotidyl transferase, ATPase and helicase activities. In Cynanchum acutum (Little mallow), this protein is Replication-associated protein.